We begin with the raw amino-acid sequence, 793 residues long: Endonuclease MutS2 (793 aa).

Position 329-336 (329-336 (GPNTGGKT)) interacts with ATP. Residues 611–639 (LARARQAVEPTEEEQRARRRGEVPRGLKP) are disordered. Positions 623–639 (EEQRARRRGEVPRGLKP) are enriched in basic and acidic residues. Positions 717–792 (VDLRGLMVEE…GDGVTVAKLR (76 aa)) constitute a Smr domain.

Belongs to the DNA mismatch repair MutS family. MutS2 subfamily. In terms of assembly, homodimer. Binds to stalled ribosomes, contacting rRNA.

Endonuclease that is involved in the suppression of homologous recombination and thus may have a key role in the control of bacterial genetic diversity. In terms of biological role, acts as a ribosome collision sensor, splitting the ribosome into its 2 subunits. Detects stalled/collided 70S ribosomes which it binds and splits by an ATP-hydrolysis driven conformational change. Acts upstream of the ribosome quality control system (RQC), a ribosome-associated complex that mediates the extraction of incompletely synthesized nascent chains from stalled ribosomes and their subsequent degradation. Probably generates substrates for RQC. The chain is Endonuclease MutS2 from Symbiobacterium thermophilum (strain DSM 24528 / JCM 14929 / IAM 14863 / T).